The following is an 846-amino-acid chain: Leucine--tRNA ligase (846 aa).

The 'HIGH' region signature appears at 42-52; the sequence is PYPSGNLHMGH. A 'KMSKS' region motif is present at residues 586–590; the sequence is KMSKS. Position 589 (Lys589) interacts with ATP.

This sequence belongs to the class-I aminoacyl-tRNA synthetase family.

The protein localises to the cytoplasm. It carries out the reaction tRNA(Leu) + L-leucine + ATP = L-leucyl-tRNA(Leu) + AMP + diphosphate. In Heliobacterium modesticaldum (strain ATCC 51547 / Ice1), this protein is Leucine--tRNA ligase.